A 467-amino-acid chain; its full sequence is Tyrosine phenol-lyase (467 aa).

Residue Lys268 is modified to N6-(pyridoxal phosphate)lysine.

Belongs to the beta-eliminating lyase family. As to quaternary structure, homotetramer. Pyridoxal 5'-phosphate serves as cofactor.

It carries out the reaction L-tyrosine + H2O = phenol + pyruvate + NH4(+). This Nostoc punctiforme (strain ATCC 29133 / PCC 73102) protein is Tyrosine phenol-lyase.